We begin with the raw amino-acid sequence, 318 residues long: Pantothenate kinase (318 aa).

Residue 96 to 103 (GSVAVGKS) coordinates ATP.

The protein belongs to the prokaryotic pantothenate kinase family.

The protein localises to the cytoplasm. It carries out the reaction (R)-pantothenate + ATP = (R)-4'-phosphopantothenate + ADP + H(+). Its pathway is cofactor biosynthesis; coenzyme A biosynthesis; CoA from (R)-pantothenate: step 1/5. The sequence is that of Pantothenate kinase from Bradyrhizobium diazoefficiens (strain JCM 10833 / BCRC 13528 / IAM 13628 / NBRC 14792 / USDA 110).